We begin with the raw amino-acid sequence, 500 residues long: Prostacyclin synthase (500 aa).

A helical membrane pass occupies residues methionine 1 to serine 20. Substrate contacts are provided by residues arginine 106, leucine 112, asparagine 287, threonine 358–arginine 359, and arginine 382. Cysteine 441 contributes to the heme binding site.

The protein belongs to the cytochrome P450 family. The cofactor is heme. Widely expressed; particularly abundant in ovary, heart, skeletal muscle, lung and prostate.

Its subcellular location is the endoplasmic reticulum membrane. It catalyses the reaction prostaglandin H2 = prostaglandin I2. It carries out the reaction a hydroperoxyeicosatetraenoate = an oxoeicosatetraenoate + H2O. The enzyme catalyses (15S)-hydroperoxy-(5Z,8Z,11Z,13E)-eicosatetraenoate = 15-oxo-(5Z,8Z,11Z,13E)-eicosatetraenoate + H2O. The catalysed reaction is (15S)-hydroperoxy-(5Z,8Z,11Z,13E)-eicosatetraenoate + AH2 = (15S)-hydroxy-(5Z,8Z,11Z,13E)-eicosatetraenoate + A + H2O. In terms of biological role, catalyzes the biosynthesis and metabolism of eicosanoids. Catalyzes the isomerization of prostaglandin H2 to prostacyclin (= prostaglandin I2), a potent mediator of vasodilation and inhibitor of platelet aggregation. Additionally, displays dehydratase activity, toward hydroperoxyeicosatetraenoates (HPETEs), especially toward (15S)-hydroperoxy-(5Z,8Z,11Z,13E)-eicosatetraenoate (15(S)-HPETE). This Homo sapiens (Human) protein is Prostacyclin synthase (PTGIS).